Consider the following 771-residue polypeptide: Probable dipeptidyl peptidase 4 (771 aa).

Residues 1 to 16 (MKYSKLLLLLVSVVQA) form the signal peptide. Residues N37, N80, N114, N173, N222, N470, and N495 are each glycosylated (N-linked (GlcNAc...) asparagine). Residues S618, D695, and H730 each act as charge relay system in the active site.

Belongs to the peptidase S9B family.

It is found in the secreted. The enzyme catalyses Release of an N-terminal dipeptide, Xaa-Yaa-|-Zaa-, from a polypeptide, preferentially when Yaa is Pro, provided Zaa is neither Pro nor hydroxyproline.. Functionally, extracellular dipeptidyl-peptidase which removes N-terminal dipeptides sequentially from polypeptides having unsubstituted N-termini provided that the penultimate residue is proline. The sequence is that of Probable dipeptidyl peptidase 4 (dpp4) from Aspergillus flavus (strain ATCC 200026 / FGSC A1120 / IAM 13836 / NRRL 3357 / JCM 12722 / SRRC 167).